The chain runs to 486 residues: uncharacterized protein (486 aa).

The chain crosses the membrane as a helical span at residues His7–Tyr28. N-linked (GlcNAc...) asparagine; by host glycans are attached at residues Asn73, Asn83, and Asn195. A coiled-coil region spans residues Glu183–Leu233. The interval Ser299 to Pro329 is disordered. A compositionally biased stretch (polar residues) spans Gln300 to Ser323. Residue Asn461 is glycosylated (N-linked (GlcNAc...) asparagine; by host).

The protein belongs to the asfivirus B475L family.

It localises to the host membrane. This is an uncharacterized protein from Ornithodoros (relapsing fever ticks).